A 359-amino-acid polypeptide reads, in one-letter code: S-adenosylmethionine:tRNA ribosyltransferase-isomerase (359 aa).

The protein belongs to the QueA family. As to quaternary structure, monomer.

Its subcellular location is the cytoplasm. It carries out the reaction 7-aminomethyl-7-carbaguanosine(34) in tRNA + S-adenosyl-L-methionine = epoxyqueuosine(34) in tRNA + adenine + L-methionine + 2 H(+). The protein operates within tRNA modification; tRNA-queuosine biosynthesis. Functionally, transfers and isomerizes the ribose moiety from AdoMet to the 7-aminomethyl group of 7-deazaguanine (preQ1-tRNA) to give epoxyqueuosine (oQ-tRNA). This is S-adenosylmethionine:tRNA ribosyltransferase-isomerase from Ralstonia pickettii (strain 12J).